The sequence spans 207 residues: Large ribosomal subunit protein uL4 (207 aa).

Residues S55–Q75 form a disordered region. Residues G60–G71 show a composition bias toward basic residues.

This sequence belongs to the universal ribosomal protein uL4 family. As to quaternary structure, part of the 50S ribosomal subunit.

Functionally, one of the primary rRNA binding proteins, this protein initially binds near the 5'-end of the 23S rRNA. It is important during the early stages of 50S assembly. It makes multiple contacts with different domains of the 23S rRNA in the assembled 50S subunit and ribosome. Its function is as follows. Forms part of the polypeptide exit tunnel. The protein is Large ribosomal subunit protein uL4 of Staphylococcus epidermidis (strain ATCC 35984 / DSM 28319 / BCRC 17069 / CCUG 31568 / BM 3577 / RP62A).